Reading from the N-terminus, the 425-residue chain is Serine--tRNA ligase (425 aa).

233 to 235 (TAE) lines the L-serine pocket. 264–266 (RAE) lines the ATP pocket. Glu-287 is a binding site for L-serine. An ATP-binding site is contributed by 351–354 (EISS). Ser-387 lines the L-serine pocket.

This sequence belongs to the class-II aminoacyl-tRNA synthetase family. Type-1 seryl-tRNA synthetase subfamily. As to quaternary structure, homodimer. The tRNA molecule binds across the dimer.

The protein localises to the cytoplasm. It carries out the reaction tRNA(Ser) + L-serine + ATP = L-seryl-tRNA(Ser) + AMP + diphosphate + H(+). The catalysed reaction is tRNA(Sec) + L-serine + ATP = L-seryl-tRNA(Sec) + AMP + diphosphate + H(+). It functions in the pathway aminoacyl-tRNA biosynthesis; selenocysteinyl-tRNA(Sec) biosynthesis; L-seryl-tRNA(Sec) from L-serine and tRNA(Sec): step 1/1. Catalyzes the attachment of serine to tRNA(Ser). Is also able to aminoacylate tRNA(Sec) with serine, to form the misacylated tRNA L-seryl-tRNA(Sec), which will be further converted into selenocysteinyl-tRNA(Sec). The sequence is that of Serine--tRNA ligase from Clostridium botulinum (strain Alaska E43 / Type E3).